The primary structure comprises 235 residues: 15,16-dihydrobiliverdin:ferredoxin oxidoreductase (235 aa).

Belongs to the HY2 family.

The catalysed reaction is 15,16-dihydrobiliverdin + oxidized 2[4Fe-4S]-[ferredoxin] = biliverdin IXalpha + reduced 2[4Fe-4S]-[ferredoxin] + 2 H(+). Catalyzes the two-electron reduction of biliverdin IX-alpha at the C15 methine bridge. In Synechococcus sp. (strain CC9605), this protein is 15,16-dihydrobiliverdin:ferredoxin oxidoreductase.